The following is a 304-amino-acid chain: Aspartate carbamoyltransferase catalytic subunit (304 aa).

The carbamoyl phosphate site is built by Arg-55 and Thr-56. Residue Lys-83 participates in L-aspartate binding. 3 residues coordinate carbamoyl phosphate: Arg-105, His-133, and Gln-136. The L-aspartate site is built by Arg-166 and Arg-220. Gly-261 and Pro-262 together coordinate carbamoyl phosphate.

Belongs to the aspartate/ornithine carbamoyltransferase superfamily. ATCase family. As to quaternary structure, heterododecamer (2C3:3R2) of six catalytic PyrB chains organized as two trimers (C3), and six regulatory PyrI chains organized as three dimers (R2).

The catalysed reaction is carbamoyl phosphate + L-aspartate = N-carbamoyl-L-aspartate + phosphate + H(+). The protein operates within pyrimidine metabolism; UMP biosynthesis via de novo pathway; (S)-dihydroorotate from bicarbonate: step 2/3. Its function is as follows. Catalyzes the condensation of carbamoyl phosphate and aspartate to form carbamoyl aspartate and inorganic phosphate, the committed step in the de novo pyrimidine nucleotide biosynthesis pathway. The sequence is that of Aspartate carbamoyltransferase catalytic subunit from Caldanaerobacter subterraneus subsp. tengcongensis (strain DSM 15242 / JCM 11007 / NBRC 100824 / MB4) (Thermoanaerobacter tengcongensis).